The following is a 382-amino-acid chain: 3-dehydroquinate synthase (382 aa).

Residues 81–86 (EGEISK), 115–119 (GVVGD), 139–140 (TS), Lys-152, and Lys-161 contribute to the NAD(+) site. 3 residues coordinate Zn(2+): Glu-194, His-256, and His-274.

Belongs to the sugar phosphate cyclases superfamily. Dehydroquinate synthase family. NAD(+) serves as cofactor. Requires Co(2+) as cofactor. The cofactor is Zn(2+).

The protein localises to the cytoplasm. The enzyme catalyses 7-phospho-2-dehydro-3-deoxy-D-arabino-heptonate = 3-dehydroquinate + phosphate. Its pathway is metabolic intermediate biosynthesis; chorismate biosynthesis; chorismate from D-erythrose 4-phosphate and phosphoenolpyruvate: step 2/7. Functionally, catalyzes the conversion of 3-deoxy-D-arabino-heptulosonate 7-phosphate (DAHP) to dehydroquinate (DHQ). The polypeptide is 3-dehydroquinate synthase (Bradyrhizobium diazoefficiens (strain JCM 10833 / BCRC 13528 / IAM 13628 / NBRC 14792 / USDA 110)).